Consider the following 504-residue polypeptide: Glucose-6-phosphate isomerase (504 aa).

Catalysis depends on E333, which acts as the Proton donor. Catalysis depends on residues H364 and K473.

Belongs to the GPI family.

Its subcellular location is the cytoplasm. The catalysed reaction is alpha-D-glucose 6-phosphate = beta-D-fructose 6-phosphate. The protein operates within carbohydrate biosynthesis; gluconeogenesis. It participates in carbohydrate degradation; glycolysis; D-glyceraldehyde 3-phosphate and glycerone phosphate from D-glucose: step 2/4. Its function is as follows. Catalyzes the reversible isomerization of glucose-6-phosphate to fructose-6-phosphate. This is Glucose-6-phosphate isomerase from Xanthomonas campestris pv. campestris (strain B100).